A 145-amino-acid chain; its full sequence is MAKSPLGLFAGRVLKAKKKRQRWSISRYKRRELGLDRKANPMGGSPQARGIVLEKVGVEAKQPNSAVRKCVRVQLIKNGKSITAFLPRDGAMNFIDEHDEVHVEGMGATQGGAMGDIPGVRFKVFKVNGTSLHELVIGKKEKPRR.

The protein belongs to the universal ribosomal protein uS12 family. As to quaternary structure, part of the 30S ribosomal subunit.

In terms of biological role, with S4 and S5 plays an important role in translational accuracy. Located at the interface of the 30S and 50S subunits. This is Small ribosomal subunit protein uS12 from Cenarchaeum symbiosum (strain A).